We begin with the raw amino-acid sequence, 261 residues long: uncharacterized protein (261 aa).

This sequence belongs to the FrhB family.

This is an uncharacterized protein from Methanocaldococcus jannaschii (strain ATCC 43067 / DSM 2661 / JAL-1 / JCM 10045 / NBRC 100440) (Methanococcus jannaschii).